Reading from the N-terminus, the 174-residue chain is MATVAELKAVLKDTLEKKGVLGHLKARIRAEVFNALDDDREPRPSLSHENLLINELIREYLEFNKYKYTASVLIAESGQPVVPLDRQFLIHELNAFEESKDNTIPLLYGILAHFLRGTKDGIQNAFLKGPSLQPSDPSLGRQPSRRKPMDDHLRKEEQKSTNIEDLHVSQAVNR.

The necessary and sufficient for homooligomerization and localization to centrosomes and pericentriolar satellites stretch occupies residues 1–104; sequence MATVAELKAV…AFEESKDNTI (104 aa). A LisH domain is found at 49–81; it reads ENLLINELIREYLEFNKYKYTASVLIAESGQPV. Residues 129 to 174 are disordered; it reads GPSLQPSDPSLGRQPSRRKPMDDHLRKEEQKSTNIEDLHVSQAVNR. A Phosphoserine modification is found at serine 144. A compositionally biased stretch (basic and acidic residues) spans 147–167; it reads KPMDDHLRKEEQKSTNIEDLH.

Belongs to the CEP43 family. In terms of assembly, homooligomer; probably required for localization to centrosomes. Forms a complex with KIAA0753/OFIP and OFD1; within this complex may stabilize the interaction between OFD1 and KIAA0753/OFIP. Interacts with PCM1; this interaction may be mediated by KIAA0753/OFIP. Interacts with PLK1 in later G1, S, G2 and M phases of the cell cycle; this interaction recruits PLK1 to centrosomes. Widely expressed. Detected in brain, heart, kidney, liver, lung, skeletal muscle, placenta and intestine.

It localises to the cytoplasm. The protein resides in the cytoskeleton. It is found in the microtubule organizing center. Its subcellular location is the centrosome. The protein localises to the centriole. It localises to the cell projection. The protein resides in the cilium. It is found in the cilium basal body. Its subcellular location is the cytoplasmic granule. The protein localises to the centriolar satellite. Functionally, involved in the biogenesis of cilia. Required for the recruitment of PLK1 to centrosomes and S phase progression. This Homo sapiens (Human) protein is Centrosomal protein 20.